Reading from the N-terminus, the 598-residue chain is Probable translation initiation factor IF-2 (598 aa).

A tr-type G domain is found at 3–225; that stretch reads LRCPIVSVLG…GLAQKFLEQK (223 aa). Positions 12-19 are G1; the sequence is GHVDHGKT. Residue 12–19 participates in GTP binding; sequence GHVDHGKT. The G2 stretch occupies residues 37-41; sequence GITQH. The segment at 76 to 79 is G3; sequence DTPG. Residues 76-80 and 130-133 each bind GTP; these read DTPGH and NKVD. A G4 region spans residues 130-133; that stretch reads NKVD. The tract at residues 200-202 is G5; sequence SAM.

It belongs to the TRAFAC class translation factor GTPase superfamily. Classic translation factor GTPase family. IF-2 subfamily.

In terms of biological role, function in general translation initiation by promoting the binding of the formylmethionine-tRNA to ribosomes. Seems to function along with eIF-2. This Methanococcus maripaludis (strain C7 / ATCC BAA-1331) protein is Probable translation initiation factor IF-2.